The sequence spans 106 residues: ATP-dependent Clp protease adapter protein ClpS (106 aa).

Belongs to the ClpS family. As to quaternary structure, binds to the N-terminal domain of the chaperone ClpA.

Its function is as follows. Involved in the modulation of the specificity of the ClpAP-mediated ATP-dependent protein degradation. This Escherichia coli O127:H6 (strain E2348/69 / EPEC) protein is ATP-dependent Clp protease adapter protein ClpS.